Here is a 25-residue protein sequence, read N- to C-terminus: Ranatuerin-1 (25 aa).

A disulfide bridge links cysteine 19 with cysteine 25.

It belongs to the frog skin active peptide (FSAP) family. Ranatuerin subfamily. Expressed by the skin glands.

It localises to the secreted. Functionally, antibacterial activity against Gram-positive bacterium S.aureus (MIC=50 uM) and Gram-negative bacterium E.coli (MIC=2 uM). Has activity against C.albicans (MIC=70 uM). Shows no detectable hemolytic activity towards human erythrocytes. The protein is Ranatuerin-1 of Aquarana catesbeiana (American bullfrog).